The primary structure comprises 987 residues: SNF2 domain-containing protein ENL1 (987 aa).

Disordered stretches follow at residues 1-172 (MASP…AYGG) and 224-245 (FGDY…ENHA). Composition is skewed to pro residues over residues 18-27 (TPPAPTPLAA) and 51-71 (NPNP…PQEP). A compositionally biased stretch (basic and acidic residues) spans 99–110 (DSIRDILDDLTT). The span at 141–156 (PSQSQLNDGTKPSSSF) shows a compositional bias: polar residues. The span at 226-237 (DYDDEDDIDQDA) shows a compositional bias: acidic residues. The region spanning 292-466 (WVLHCRGTGG…WALFYFCCPE (175 aa)) is the Helicase ATP-binding domain. ATP is bound at residue 305–312 (DDMGLGKT). Positions 417 to 420 (DEGH) match the DEAH box motif. A Helicase C-terminal domain is found at 645–801 (SLLQNLVSEG…TRYFSKRDIQ (157 aa)).

This sequence belongs to the SNF2/RAD54 helicase family. As to expression, expressed in ovaries, roots, shoots and leaves.

The protein localises to the cytoplasm. It localises to the chromosome. DNA helicase that acts as an essential component of the spindle assembly checkpoint. Plays an indispensable role in the development of seed endosperm. Is required to secure sister chromosome separation during endosperm syncytial mitosis, which involves extremely rapid free nuclear cycles. In Oryza sativa subsp. japonica (Rice), this protein is SNF2 domain-containing protein ENL1.